A 646-amino-acid polypeptide reads, in one-letter code: MFTLDSIVGAHINYALDKTAHLPETITNNVSNVEITLKDYQYFVSRVFIGLKNLNSMLLFWDTGMGKTLTAVYIIKHIKELFPRWIILIFIKKSLYIDPWLNTIRAFAPDISNNIIFVYYDSSSSLDKFVNIYRSIENSLNKKNRLLIIIDEVHKLISRSVKKDNSERNFTPTYKKLIKLANYEGNKILCMSATPIYNNIDEFNNLIGLLRPNVMTFKEEYIINGKLINFKEIRDTLLGLCSYKRLIEADSFTETNYVEGYAKKNVIYHNIIMSEEQSKLFNLAEKYDYKTELGGLKTMRRLVSSFAFYDLKIKGDLNNIEYNDMIKRKLAEFSEFTKTINFSNNFIEKFKRDDLKNDILLEDINNYNILYQYSCKYIEACRIILNSRGKVLLFEPLVNFEGIASLKYYFNCFNITYVEYSSKTLKTRDIEISEYNNYENNDGKNIKVCIFSYAGSEGISFKCVNDIIILDMPWNESELKQIMGRSIRLNSHNDLPLENRYVNVHFIISYTNNRKSVDKEILDIIKDKQSKINVVFDLLKSISIESIHNIHKYIEPVESETIFDTIRKTRMREMNISNVIVKIKLYPIMYCKDYDRATILKGLLNKENNIIYNEDTAVAKLTIENNKPVFIIVDDNLIYIADDYYE.

In terms of domain architecture, Helicase ATP-binding spans 48–213; sequence FIGLKNLNSM…NNLIGLLRPN (166 aa). 61 to 68 is a binding site for ATP; that stretch reads WDTGMGKT. Positions 151-154 match the DEXH box motif; sequence DEVH. In terms of domain architecture, Helicase C-terminal spans 377-540; the sequence is YIEACRIILN…KINVVFDLLK (164 aa). Residues 466–532 form a binding to the cap-specific mRNA (nucleoside-2'-O-)-methyltransferase region; it reads DIIILDMPWN…DIIKDKQSKI (67 aa).

Belongs to the helicase family. NPH I subfamily. As to quaternary structure, monomer. Interacts (via C-terminus) with RAP94 (via N-terminus). Interacts with the cap-specific mRNA (nucleoside-2'-O-)-methyltransferase.

It is found in the virion. It carries out the reaction a ribonucleoside 5'-triphosphate + H2O = a ribonucleoside 5'-diphosphate + phosphate + H(+). In terms of biological role, DNA-dependent ATPase required for providing the needed energy to achieve the termination of early transcripts. Acts in concert with the RAP94 subunit of the virion RNA polymerase and the capping enzyme/VTF to catalyze release of UUUUUNU-containing nascent RNA from the elongation complex. NPH-I must bind ssDNA in order to exhibit ATPase activity. This chain is Nucleoside triphosphatase I (NPH1), found in Heliothis armigera entomopoxvirus (HaEPV).